We begin with the raw amino-acid sequence, 1087 residues long: Alpha-mannosidase G (1087 aa).

Zn(2+) is bound by residues His264, Asp266, Asp376, and His579. Asp376 serves as the catalytic Nucleophile.

It belongs to the glycosyl hydrolase 38 family. Zn(2+) serves as cofactor.

It carries out the reaction Hydrolysis of terminal, non-reducing alpha-D-mannose residues in alpha-D-mannosides.. The chain is Alpha-mannosidase G (manG) from Dictyostelium discoideum (Social amoeba).